The following is a 372-amino-acid chain: tRNA-specific 2-thiouridylase MnmA (372 aa).

ATP contacts are provided by residues 13-20 (GMSGGVDS) and Met-39. The interaction with target base in tRNA stretch occupies residues 99-101 (NPD). The Nucleophile role is filled by Cys-104. Residues Cys-104 and Cys-200 are joined by a disulfide bond. Residue Gly-128 coordinates ATP. The interaction with tRNA stretch occupies residues 150–152 (KDQ). The Cysteine persulfide intermediate role is filled by Cys-200. The tract at residues 310–311 (RY) is interaction with tRNA.

The protein belongs to the MnmA/TRMU family.

It is found in the cytoplasm. The enzyme catalyses S-sulfanyl-L-cysteinyl-[protein] + uridine(34) in tRNA + AH2 + ATP = 2-thiouridine(34) in tRNA + L-cysteinyl-[protein] + A + AMP + diphosphate + H(+). In terms of biological role, catalyzes the 2-thiolation of uridine at the wobble position (U34) of tRNA, leading to the formation of s(2)U34. In Bacillus pumilus (strain SAFR-032), this protein is tRNA-specific 2-thiouridylase MnmA.